The sequence spans 295 residues: 4-diphosphocytidyl-2-C-methyl-D-erythritol kinase (295 aa).

Residue Lys22 is part of the active site. ATP is bound at residue 106-116; it reads PAGGGFGGGSS. Asp148 is an active-site residue.

It belongs to the GHMP kinase family. IspE subfamily.

It catalyses the reaction 4-CDP-2-C-methyl-D-erythritol + ATP = 4-CDP-2-C-methyl-D-erythritol 2-phosphate + ADP + H(+). Its pathway is isoprenoid biosynthesis; isopentenyl diphosphate biosynthesis via DXP pathway; isopentenyl diphosphate from 1-deoxy-D-xylulose 5-phosphate: step 3/6. Functionally, catalyzes the phosphorylation of the position 2 hydroxy group of 4-diphosphocytidyl-2C-methyl-D-erythritol. The sequence is that of 4-diphosphocytidyl-2-C-methyl-D-erythritol kinase from Xanthomonas euvesicatoria pv. vesicatoria (strain 85-10) (Xanthomonas campestris pv. vesicatoria).